Consider the following 961-residue polypeptide: SH3 domain-binding protein 4 (961 aa).

The SH3 1 domain occupies 55–114 (GNAKEVIAIKDYCPNNFTTLKFSKGDHLYVLDTSGGEWWYAHNTTEMGYIPSSYVQPLNY). A phosphoserine mark is found at serine 131, serine 244, serine 249, serine 277, and serine 294. In terms of domain architecture, ZU5 spans 315-452 (TNIVCKLDSS…LEPCMYLAIV (138 aa)). Serine 635 carries the phosphoserine modification. Positions 652–722 (SSLKFGKLLK…HTKNVLVVGK (71 aa)) constitute an SH3 2 domain.

In terms of assembly, homodimer or homooligomer. Interacts with DNM2, EPS15, clathrin, the adapter protein complex 2/AP-2 and TFRC. Interacts with the Rag GTPases RRAGA, RRAGB, RRAGC and RRAGD; the interaction is most probably direct, preferentially occurs with their inactive GDP-bound form and is negatively regulated by amino acids. In terms of processing, phosphorylated upon EGF stimulation. Phosphorylation prevents interaction with DNM2.

The protein resides in the membrane. It localises to the clathrin-coated pit. The protein localises to the cytoplasmic vesicle. Its subcellular location is the clathrin-coated vesicle. It is found in the nucleus. Its function is as follows. May function in transferrin receptor internalization at the plasma membrane through a cargo-specific control of clathrin-mediated endocytosis. Alternatively, may act as a negative regulator of the amino acid-induced TOR signaling by inhibiting the formation of active Rag GTPase complexes. Preferentially binds inactive Rag GTPase complexes and prevents their interaction with the mTORC1 complex inhibiting its relocalization to lysosomes and its activation. Thereby, may indirectly regulate cell growth, proliferation and autophagy. The sequence is that of SH3 domain-binding protein 4 (Sh3bp4) from Rattus norvegicus (Rat).